Reading from the N-terminus, the 120-residue chain is Immunoglobulin kappa variable 2-30 (120 aa).

The signal sequence occupies residues 1-20; the sequence is MRLPAQLLGLLMLWVPGSSG. The tract at residues 21 to 43 is framework-1; the sequence is DVVMTQSPLSLPVTLGQPASISC. An Ig-like domain is found at 21-120; that stretch reads DVVMTQSPLS…YYCMQGTHWP (100 aa). An intrachain disulfide couples C43 to C113. A complementarity-determining-1 region spans residues 44–59; that stretch reads RSSQSLVYSDGNTYLN. The interval 60–74 is framework-2; the sequence is WFQQRPGQSPRRLIY. Residues 75-81 form a complementarity-determining-2 region; sequence KVSNRDS. Positions 82–113 are framework-3; that stretch reads GVPDRFSGSGSGTDFTLKISRVEAEDVGVYYC. Positions 114 to 120 are complementarity-determining-3; the sequence is MQGTHWP.

In terms of assembly, immunoglobulins are composed of two identical heavy chains and two identical light chains; disulfide-linked.

Its subcellular location is the secreted. It is found in the cell membrane. Functionally, v region of the variable domain of immunoglobulin light chains that participates in the antigen recognition. Immunoglobulins, also known as antibodies, are membrane-bound or secreted glycoproteins produced by B lymphocytes. In the recognition phase of humoral immunity, the membrane-bound immunoglobulins serve as receptors which, upon binding of a specific antigen, trigger the clonal expansion and differentiation of B lymphocytes into immunoglobulins-secreting plasma cells. Secreted immunoglobulins mediate the effector phase of humoral immunity, which results in the elimination of bound antigens. The antigen binding site is formed by the variable domain of one heavy chain, together with that of its associated light chain. Thus, each immunoglobulin has two antigen binding sites with remarkable affinity for a particular antigen. The variable domains are assembled by a process called V-(D)-J rearrangement and can then be subjected to somatic hypermutations which, after exposure to antigen and selection, allow affinity maturation for a particular antigen. The protein is Immunoglobulin kappa variable 2-30 of Homo sapiens (Human).